A 271-amino-acid polypeptide reads, in one-letter code: MKTSIASHLLEKVRAENPLVHNITNQVVTNFTANGLLALGASPVMANAKEEVAEMAQLADALVLNIGTLTKETVESMILAGQSANKKGIPVLLDPVGVGATTFRLKAAKQLLEQVNITVVRGNAAEIAHLLEVDGWESKGVDAKAANGDVSALVKQAAKTLQTVVVITGEVDVVSDGEDVLSIHNGHEWLTKVTGTGCLLTSVIGAFCAAGERPLHASAAALLFYGVAAEKAAQYTQNKGPGTFQMELLNALSHTTGNDVLTLGKIGRNVT.

Substrate is bound at residue M45. Residues R121 and T168 each contribute to the ATP site. G195 serves as a coordination point for substrate.

It belongs to the Thz kinase family. It depends on Mg(2+) as a cofactor.

It carries out the reaction 5-(2-hydroxyethyl)-4-methylthiazole + ATP = 4-methyl-5-(2-phosphooxyethyl)-thiazole + ADP + H(+). Its pathway is cofactor biosynthesis; thiamine diphosphate biosynthesis; 4-methyl-5-(2-phosphoethyl)-thiazole from 5-(2-hydroxyethyl)-4-methylthiazole: step 1/1. Functionally, catalyzes the phosphorylation of the hydroxyl group of 4-methyl-5-beta-hydroxyethylthiazole (THZ). The polypeptide is Hydroxyethylthiazole kinase (Bacillus pumilus (strain SAFR-032)).